A 727-amino-acid polypeptide reads, in one-letter code: LIM domain-binding protein 3 (727 aa).

One can recognise a PDZ domain in the interval 1-84; it reads MSYSVTLTGP…NLSLTLQKSK (84 aa). A phosphoserine mark is found at S44, S121, and S123. Residues 86 to 197 form a disordered region; the sequence is PIPISTTAPP…GSSQPRQYNN (112 aa). Over residues 140-156 the composition is skewed to low complexity; sequence PTFSPAFSRPSAFSSLA. Positions 188–197 are enriched in polar residues; it reads GSSQPRQYNN. At S217 the chain carries Phosphoserine. R219 carries the omega-N-methylarginine modification. A Phosphoserine modification is found at S223. Disordered regions lie at residues 284–440 and 472–529; these read TEFM…YTPS and APSV…PQVP. The segment covering 312–385 has biased composition (low complexity); the sequence is ATTPLLPASA…SAPATHTSYS (74 aa). A compositionally biased stretch (pro residues) spans 428 to 440; sequence PYTPSPAPAYTPS. Residues 494–513 are compositionally biased toward polar residues; sequence DSFSQKFAPGKSTTSISKQT. R516 and R533 each carry omega-N-methylarginine. LIM zinc-binding domains are found at residues 549–607, 608–667, and 668–727; these read PLCG…QFFA, PLCA…LFST, and KCHG…TINL.

Interacts via its LIM domains with various PKC isoforms. Interacts via its PDZ domain with the ACTN2 C-terminal region. Interacts with MYOZ1, MYOZ2 and MYOZ3. In terms of tissue distribution, expressed primarily in skeletal muscle and to a lesser extent in heart. Also detected in brain and placenta.

The protein resides in the cytoplasm. The protein localises to the perinuclear region. It is found in the cell projection. It localises to the pseudopodium. Its subcellular location is the cytoskeleton. The protein resides in the myofibril. The protein localises to the sarcomere. It is found in the z line. Its function is as follows. May function as an adapter in striated muscle to couple protein kinase C-mediated signaling via its LIM domains to the cytoskeleton. The protein is LIM domain-binding protein 3 of Homo sapiens (Human).